Reading from the N-terminus, the 78-residue chain is Large ribosomal subunit protein eL20 (78 aa).

Belongs to the eukaryotic ribosomal protein eL20 family. As to quaternary structure, part of the 50S ribosomal subunit. Binds 23S rRNA.

The polypeptide is Large ribosomal subunit protein eL20 (Pyrobaculum aerophilum (strain ATCC 51768 / DSM 7523 / JCM 9630 / CIP 104966 / NBRC 100827 / IM2)).